The following is a 168-amino-acid chain: Protein-export protein SecB (168 aa).

Belongs to the SecB family. As to quaternary structure, homotetramer, a dimer of dimers. One homotetramer interacts with 1 SecA dimer.

It localises to the cytoplasm. Functionally, one of the proteins required for the normal export of preproteins out of the cell cytoplasm. It is a molecular chaperone that binds to a subset of precursor proteins, maintaining them in a translocation-competent state. It also specifically binds to its receptor SecA. This Rhizobium meliloti (strain 1021) (Ensifer meliloti) protein is Protein-export protein SecB.